Here is a 66-residue protein sequence, read N- to C-terminus: Toxin Tppa2 (66 aa).

Positions 1 to 63 constitute an LCN-type CS-alpha/beta domain; sequence KDGYLVGNDG…TWSRATNKCG (63 aa). Cystine bridges form between Cys-11-Cys-62, Cys-15-Cys-37, Cys-23-Cys-43, and Cys-27-Cys-45. A Cysteine amide modification is found at Cys-62.

This sequence belongs to the long (4 C-C) scorpion toxin superfamily. Sodium channel inhibitor family. Beta subfamily. In terms of tissue distribution, expressed by the venom gland.

The protein localises to the secreted. Functionally, beta toxins bind voltage-independently at site-4 of sodium channels (Nav) and shift the voltage of activation toward more negative potentials thereby affecting sodium channel activation and promoting spontaneous and repetitive firing. In Tityus pachyurus (Colombian scorpion), this protein is Toxin Tppa2.